Consider the following 369-residue polypeptide: Maltose/maltodextrin import ATP-binding protein MalK (369 aa).

In terms of domain architecture, ABC transporter spans 4–234; that stretch reads VQLRNVTKAW…PADRFVAGFI (231 aa). 36–43 is an ATP binding site; sequence GPSGCGKS.

The protein belongs to the ABC transporter superfamily. Maltooligosaccharide importer (TC 3.A.1.1.1) family. As to quaternary structure, the complex is composed of two ATP-binding proteins (MalK), two transmembrane proteins (MalG and MalK) and a solute-binding protein (MalE).

It localises to the cell inner membrane. It carries out the reaction D-maltose(out) + ATP + H2O = D-maltose(in) + ADP + phosphate + H(+). Part of the ABC transporter complex MalEFGK involved in maltose/maltodextrin import. Responsible for energy coupling to the transport system. This chain is Maltose/maltodextrin import ATP-binding protein MalK, found in Salmonella paratyphi A (strain ATCC 9150 / SARB42).